The primary structure comprises 828 residues: Periplasmic nitrate reductase (828 aa).

Residues 1-32 (MNLSRRDFMKANAAMAAATAAGLSIPVKNVEA) constitute a signal peptide (tat-type signal). Residues 37 to 93 (IKWDKAVCRFCGTGCAVLVGTKDGRVVASQGDPDAEVNRGLNCIKGYFLPKIMYGKD) enclose the 4Fe-4S Mo/W bis-MGD-type domain. Cys44, Cys47, Cys51, and Cys79 together coordinate [4Fe-4S] cluster. Residues Lys81, Gln148, Asn173, Cys177, 210–217 (WGSNMAEM), 241–245 (STFEH), Met371, Gln375, Asn481, 507–508 (SD), Lys530, Asp557, and 717–726 (TGRVLEHWHT) each bind Mo-bis(molybdopterin guanine dinucleotide). Residue Phe793 coordinates substrate. Mo-bis(molybdopterin guanine dinucleotide) contacts are provided by Asn801 and Lys818.

This sequence belongs to the prokaryotic molybdopterin-containing oxidoreductase family. NasA/NapA/NarB subfamily. Component of the periplasmic nitrate reductase NapAB complex composed of NapA and NapB. [4Fe-4S] cluster serves as cofactor. It depends on Mo-bis(molybdopterin guanine dinucleotide) as a cofactor. In terms of processing, predicted to be exported by the Tat system. The position of the signal peptide cleavage has not been experimentally proven.

It is found in the periplasm. The catalysed reaction is 2 Fe(II)-[cytochrome] + nitrate + 2 H(+) = 2 Fe(III)-[cytochrome] + nitrite + H2O. Catalytic subunit of the periplasmic nitrate reductase complex NapAB. Receives electrons from NapB and catalyzes the reduction of nitrate to nitrite. This chain is Periplasmic nitrate reductase, found in Aggregatibacter actinomycetemcomitans (Actinobacillus actinomycetemcomitans).